Reading from the N-terminus, the 173-residue chain is dCTP deaminase, dUMP-forming (173 aa).

DCTP-binding positions include 93 to 98, Asp111, 119 to 121, and Gln138; these read RSSIGR and TLE. Residue Glu121 is the Proton donor/acceptor of the active site.

This sequence belongs to the dCTP deaminase family. As to quaternary structure, homotrimer.

It catalyses the reaction dCTP + 2 H2O = dUMP + NH4(+) + diphosphate. It functions in the pathway pyrimidine metabolism; dUMP biosynthesis; dUMP from dCTP: step 1/1. Bifunctional enzyme that catalyzes both the deamination of dCTP to dUTP and the hydrolysis of dUTP to dUMP without releasing the toxic dUTP intermediate. This Leptospira borgpetersenii serovar Hardjo-bovis (strain JB197) protein is dCTP deaminase, dUMP-forming.